A 431-amino-acid polypeptide reads, in one-letter code: Glutamate-1-semialdehyde 2,1-aminomutase 2 (431 aa).

Lys-268 is modified (N6-(pyridoxal phosphate)lysine).

This sequence belongs to the class-III pyridoxal-phosphate-dependent aminotransferase family. HemL subfamily. In terms of assembly, homodimer. The cofactor is pyridoxal 5'-phosphate.

The protein resides in the cytoplasm. The catalysed reaction is (S)-4-amino-5-oxopentanoate = 5-aminolevulinate. Its pathway is porphyrin-containing compound metabolism; protoporphyrin-IX biosynthesis; 5-aminolevulinate from L-glutamyl-tRNA(Glu): step 2/2. The protein is Glutamate-1-semialdehyde 2,1-aminomutase 2 of Anoxybacillus flavithermus (strain DSM 21510 / WK1).